The chain runs to 195 residues: Ras-related protein rac-2 (195 aa).

Residue 10 to 17 (GDGAVGKT) participates in GTP binding. The Effector region motif lies at 32–40 (YILTVFDTY). Residues 57-61 (DTAGQ) and 115-118 (TKAD) contribute to the GTP site. A disordered region spans residues 176–195 (GLTPPQTPQTRAKKSNCTVL). At C192 the chain carries Cysteine methyl ester. C192 is lipidated: S-geranylgeranyl cysteine. The propeptide at 193 to 195 (TVL) is removed in mature form.

This sequence belongs to the small GTPase superfamily. Rho family.

It localises to the cell membrane. During gonad morphogenesis, plays a role in distal tip cell (DTC)-mediated guidance of gonad elongation. This is Ras-related protein rac-2 (rac-2) from Caenorhabditis elegans.